We begin with the raw amino-acid sequence, 872 residues long: Alanine--tRNA ligase (872 aa).

The Zn(2+) site is built by H567, H571, C669, and H673.

It belongs to the class-II aminoacyl-tRNA synthetase family. Zn(2+) is required as a cofactor.

Its subcellular location is the cytoplasm. It carries out the reaction tRNA(Ala) + L-alanine + ATP = L-alanyl-tRNA(Ala) + AMP + diphosphate. In terms of biological role, catalyzes the attachment of alanine to tRNA(Ala) in a two-step reaction: alanine is first activated by ATP to form Ala-AMP and then transferred to the acceptor end of tRNA(Ala). Also edits incorrectly charged Ser-tRNA(Ala) and Gly-tRNA(Ala) via its editing domain. This is Alanine--tRNA ligase from Streptococcus mutans serotype c (strain ATCC 700610 / UA159).